A 349-amino-acid chain; its full sequence is GMP reductase (349 aa).

Position 108–131 (108–131) interacts with NADP(+); the sequence is IDFLKIKKIFLLSSELKYICIDVA. Residues G181 and G183 each contribute to the K(+) site. The active-site Thioimidate intermediate is the C186. An NADP(+)-binding site is contributed by 216-239; the sequence is IISDGGCTVSGDIAKAFGGGADFV.

The protein belongs to the IMPDH/GMPR family. GuaC type 1 subfamily. As to quaternary structure, homotetramer.

The enzyme catalyses IMP + NH4(+) + NADP(+) = GMP + NADPH + 2 H(+). In terms of biological role, catalyzes the irreversible NADPH-dependent deamination of GMP to IMP. It functions in the conversion of nucleobase, nucleoside and nucleotide derivatives of G to A nucleotides, and in maintaining the intracellular balance of A and G nucleotides. The protein is GMP reductase of Buchnera aphidicola subsp. Acyrthosiphon pisum (strain 5A).